Consider the following 450-residue polypeptide: Methylenetetrahydrofolate--tRNA-(uracil-5-)-methyltransferase TrmFO (450 aa).

10–15 is an FAD binding site; the sequence is GGGLAG.

It belongs to the MnmG family. TrmFO subfamily. The cofactor is FAD.

The protein localises to the cytoplasm. The enzyme catalyses uridine(54) in tRNA + (6R)-5,10-methylene-5,6,7,8-tetrahydrofolate + NADH + H(+) = 5-methyluridine(54) in tRNA + (6S)-5,6,7,8-tetrahydrofolate + NAD(+). The catalysed reaction is uridine(54) in tRNA + (6R)-5,10-methylene-5,6,7,8-tetrahydrofolate + NADPH + H(+) = 5-methyluridine(54) in tRNA + (6S)-5,6,7,8-tetrahydrofolate + NADP(+). Catalyzes the folate-dependent formation of 5-methyl-uridine at position 54 (M-5-U54) in all tRNAs. The sequence is that of Methylenetetrahydrofolate--tRNA-(uracil-5-)-methyltransferase TrmFO from Anaeromyxobacter dehalogenans (strain 2CP-C).